The sequence spans 32 residues: Secreted proteinase (32 aa).

Residues 1 to 32 (DTANDPKYGSQYAPQKVNADVDQGVXXXHPEL) are disordered. The Charge relay system role is filled by Asp-22.

Belongs to the peptidase S8 family.

It is found in the secreted. This Haloferax mediterranei (Halobacterium mediterranei) protein is Secreted proteinase.